Consider the following 343-residue polypeptide: Methionine import ATP-binding protein MetN (343 aa).

The ABC transporter domain occupies 2–241 (IKLSNITKVF…PKTPLAQKFI (240 aa)). Residue 38 to 45 (GASGAGKS) coordinates ATP.

It belongs to the ABC transporter superfamily. Methionine importer (TC 3.A.1.24) family. In terms of assembly, the complex is composed of two ATP-binding proteins (MetN), two transmembrane proteins (MetI) and a solute-binding protein (MetQ).

The protein resides in the cell inner membrane. The catalysed reaction is L-methionine(out) + ATP + H2O = L-methionine(in) + ADP + phosphate + H(+). It carries out the reaction D-methionine(out) + ATP + H2O = D-methionine(in) + ADP + phosphate + H(+). In terms of biological role, part of the ABC transporter complex MetNIQ involved in methionine import. Responsible for energy coupling to the transport system. This chain is Methionine import ATP-binding protein MetN, found in Shigella flexneri serotype 5b (strain 8401).